A 430-amino-acid polypeptide reads, in one-letter code: Glutamate-1-semialdehyde 2,1-aminomutase 2 (430 aa).

At lysine 269 the chain carries N6-(pyridoxal phosphate)lysine.

Belongs to the class-III pyridoxal-phosphate-dependent aminotransferase family. HemL subfamily. Homodimer. It depends on pyridoxal 5'-phosphate as a cofactor.

The protein localises to the cytoplasm. It catalyses the reaction (S)-4-amino-5-oxopentanoate = 5-aminolevulinate. Its pathway is porphyrin-containing compound metabolism; protoporphyrin-IX biosynthesis; 5-aminolevulinate from L-glutamyl-tRNA(Glu): step 2/2. The protein is Glutamate-1-semialdehyde 2,1-aminomutase 2 of Bacillus pumilus (strain SAFR-032).